Here is a 465-residue protein sequence, read N- to C-terminus: Glutamate--tRNA ligase (465 aa).

The short motif at 10 to 20 is the 'HIGH' region element; that stretch reads PSPTGQLHIGG. Zn(2+)-binding residues include C99, C101, C126, and E128. Residues 236–240 carry the 'KMSKS' region motif; it reads KLSKR. K239 lines the ATP pocket.

It belongs to the class-I aminoacyl-tRNA synthetase family. Glutamate--tRNA ligase type 1 subfamily. Monomer. Zn(2+) is required as a cofactor.

It localises to the cytoplasm. It carries out the reaction tRNA(Glu) + L-glutamate + ATP = L-glutamyl-tRNA(Glu) + AMP + diphosphate. In terms of biological role, catalyzes the attachment of glutamate to tRNA(Glu) in a two-step reaction: glutamate is first activated by ATP to form Glu-AMP and then transferred to the acceptor end of tRNA(Glu). The protein is Glutamate--tRNA ligase of Lawsonia intracellularis (strain PHE/MN1-00).